The chain runs to 195 residues: Imidazoleglycerol-phosphate dehydratase (195 aa).

It belongs to the imidazoleglycerol-phosphate dehydratase family.

It is found in the cytoplasm. The enzyme catalyses D-erythro-1-(imidazol-4-yl)glycerol 3-phosphate = 3-(imidazol-4-yl)-2-oxopropyl phosphate + H2O. The protein operates within amino-acid biosynthesis; L-histidine biosynthesis; L-histidine from 5-phospho-alpha-D-ribose 1-diphosphate: step 6/9. This Burkholderia multivorans (strain ATCC 17616 / 249) protein is Imidazoleglycerol-phosphate dehydratase.